A 347-amino-acid polypeptide reads, in one-letter code: Heat-inducible transcription repressor HrcA (347 aa).

It belongs to the HrcA family.

In terms of biological role, negative regulator of class I heat shock genes (grpE-dnaK-dnaJ and groELS operons). Prevents heat-shock induction of these operons. In Sorangium cellulosum (strain So ce56) (Polyangium cellulosum (strain So ce56)), this protein is Heat-inducible transcription repressor HrcA.